A 261-amino-acid polypeptide reads, in one-letter code: Cytochrome c oxidase subunit 3 (261 aa).

Over 1–15 the chain is Mitochondrial matrix; the sequence is MAHQAHAYHMVDPSP. Residues 16–34 traverse the membrane as a helical segment; sequence WPLTGAIAALLLTSGTAVW. The Mitochondrial intermembrane portion of the chain corresponds to 35–40; that stretch reads FHFHSL. A helical transmembrane segment spans residues 41–66; that stretch reads TLLTLGNILLLLTMYQWWRDIIREGT. Over 67–72 the chain is Mitochondrial matrix; sequence FQGHHT. A helical transmembrane segment spans residues 73 to 105; it reads PPVQKGLRYGMILFITSEVFFFLGFFWAFYHAS. At 106–128 the chain is on the mitochondrial intermembrane side; it reads LAPTPELGGCWPPTGITTLDPFE. Residues 129–152 form a helical membrane-spanning segment; it reads VPLLNTAVLLASGVTVTWAHHSIM. Topologically, residues 153–155 are mitochondrial matrix; sequence EGE. The helical transmembrane segment at 156–183 threads the bilayer; that stretch reads RKQTIQALTLTILLGFYFTFLQGMEYYE. At 184 to 190 the chain is on the mitochondrial intermembrane side; it reads APFTIAD. Residues 191–223 form a helical membrane-spanning segment; the sequence is GVYGSTFFVATGFHGLHVIIGSTFLAVCLLRQV. The Mitochondrial matrix segment spans residues 224–232; it reads QYHFTSEHH. A helical transmembrane segment spans residues 233 to 256; it reads FGFEAAAWYWHFVDVVWLFLYVSI. At 257–261 the chain is on the mitochondrial intermembrane side; that stretch reads YWWGS.

Belongs to the cytochrome c oxidase subunit 3 family. As to quaternary structure, component of the cytochrome c oxidase (complex IV, CIV), a multisubunit enzyme composed of 14 subunits. The complex is composed of a catalytic core of 3 subunits MT-CO1, MT-CO2 and MT-CO3, encoded in the mitochondrial DNA, and 11 supernumerary subunits COX4I, COX5A, COX5B, COX6A, COX6B, COX6C, COX7A, COX7B, COX7C, COX8 and NDUFA4, which are encoded in the nuclear genome. The complex exists as a monomer or a dimer and forms supercomplexes (SCs) in the inner mitochondrial membrane with NADH-ubiquinone oxidoreductase (complex I, CI) and ubiquinol-cytochrome c oxidoreductase (cytochrome b-c1 complex, complex III, CIII), resulting in different assemblies (supercomplex SCI(1)III(2)IV(1) and megacomplex MCI(2)III(2)IV(2)).

The protein localises to the mitochondrion inner membrane. It catalyses the reaction 4 Fe(II)-[cytochrome c] + O2 + 8 H(+)(in) = 4 Fe(III)-[cytochrome c] + 2 H2O + 4 H(+)(out). Its function is as follows. Component of the cytochrome c oxidase, the last enzyme in the mitochondrial electron transport chain which drives oxidative phosphorylation. The respiratory chain contains 3 multisubunit complexes succinate dehydrogenase (complex II, CII), ubiquinol-cytochrome c oxidoreductase (cytochrome b-c1 complex, complex III, CIII) and cytochrome c oxidase (complex IV, CIV), that cooperate to transfer electrons derived from NADH and succinate to molecular oxygen, creating an electrochemical gradient over the inner membrane that drives transmembrane transport and the ATP synthase. Cytochrome c oxidase is the component of the respiratory chain that catalyzes the reduction of oxygen to water. Electrons originating from reduced cytochrome c in the intermembrane space (IMS) are transferred via the dinuclear copper A center (CU(A)) of subunit 2 and heme A of subunit 1 to the active site in subunit 1, a binuclear center (BNC) formed by heme A3 and copper B (CU(B)). The BNC reduces molecular oxygen to 2 water molecules using 4 electrons from cytochrome c in the IMS and 4 protons from the mitochondrial matrix. The chain is Cytochrome c oxidase subunit 3 (mt-co3) from Oncorhynchus clarkii (Cutthroat trout).